Here is a 472-residue protein sequence, read N- to C-terminus: 3-isopropylmalate dehydratase large subunit (472 aa).

[4Fe-4S] cluster contacts are provided by C347, C407, and C410.

This sequence belongs to the aconitase/IPM isomerase family. LeuC type 1 subfamily. As to quaternary structure, heterodimer of LeuC and LeuD. [4Fe-4S] cluster serves as cofactor.

It carries out the reaction (2R,3S)-3-isopropylmalate = (2S)-2-isopropylmalate. It participates in amino-acid biosynthesis; L-leucine biosynthesis; L-leucine from 3-methyl-2-oxobutanoate: step 2/4. Catalyzes the isomerization between 2-isopropylmalate and 3-isopropylmalate, via the formation of 2-isopropylmaleate. In Opitutus terrae (strain DSM 11246 / JCM 15787 / PB90-1), this protein is 3-isopropylmalate dehydratase large subunit.